A 474-amino-acid polypeptide reads, in one-letter code: PRAME family member 1 (474 aa).

An LRR 1; degenerate repeat occupies 97–124; the sequence is RWKLQVLDLRDVDENFWARWPGAWALSC. An LRR 2; degenerate repeat occupies 179 to 203; sequence HLCCSKLVNYLTPIKYLRKSLKIIY. Residues 204 to 230 form an LRR 3; degenerate repeat; that stretch reads LNSIQELEIRNMSWPRLIRKLRCYLKE. The LRR 4; degenerate repeat unit spans residues 231-265; sequence MKNLRKLVFSRCHHYTSDNELEGRLVAKFSSVFLR. 5 LRR repeats span residues 266–291, 292–323, 324–342, 348–375, and 376–400; these read LEHLQLLKIKLITFFSGHLEQLIRCL, QNPLENLELTYGYLLEEDMKCLSQYPSLGYLK, HLNLSYVLLFRISLEPLGA, AASLKTLILEGCQIHYSQLSAILPGLSR, and CSQLTTFYFGRNCMSIDALKDLLRH.

It belongs to the PRAME family.

This Homo sapiens (Human) protein is PRAME family member 1.